The primary structure comprises 252 residues: Gamma carbonic anhydrase-like 1, mitochondrial (252 aa).

A mitochondrion-targeting transit peptide spans 1-29 (MATSIARLSRRGVTSNLIRRCFAAEAALA). Residues 99 to 101 (RGD) and 114 to 115 (QE) contribute to the substrate site. H120 provides a ligand contact to Zn(2+). 3 residues coordinate substrate: R148, Q160, and Y227.

This sequence belongs to the gamma-class carbonic anhydrase family. Component of the mitochondrial oxidoreductase respiratory chain complex I; element of the extra matrix-exposed domain, which is attached to the membrane arm of this complex. Interacts with GAMMACA2.

Its subcellular location is the mitochondrion membrane. Involved in complex I assembly in mitochondria and respiration. This chain is Gamma carbonic anhydrase-like 1, mitochondrial (GAMMACAL1), found in Arabidopsis thaliana (Mouse-ear cress).